Reading from the N-terminus, the 300-residue chain is tRNA dimethylallyltransferase 1 (300 aa).

13-20 (GPTGVGKT) is a binding site for ATP. 15-20 (TGVGKT) contributes to the substrate binding site. The interaction with substrate tRNA stretch occupies residues 38–41 (DSRQ).

It belongs to the IPP transferase family. As to quaternary structure, monomer. It depends on Mg(2+) as a cofactor.

It catalyses the reaction adenosine(37) in tRNA + dimethylallyl diphosphate = N(6)-dimethylallyladenosine(37) in tRNA + diphosphate. In terms of biological role, catalyzes the transfer of a dimethylallyl group onto the adenine at position 37 in tRNAs that read codons beginning with uridine, leading to the formation of N6-(dimethylallyl)adenosine (i(6)A). This Porphyromonas gingivalis (strain ATCC BAA-308 / W83) protein is tRNA dimethylallyltransferase 1.